A 661-amino-acid polypeptide reads, in one-letter code: Peroxisomal acyl-coenzyme A oxidase 1 (661 aa).

At Ser-26 the chain carries Phosphoserine. The residue at position 65 (Lys-65) is an N6-acetyllysine. 2 positions are modified to N6-succinyllysine: Lys-89 and Lys-90. Residue Thr-139 participates in FAD binding. The residue at position 159 (Lys-159) is an N6-succinyllysine. Gly-178 is a binding site for FAD. N6-acetyllysine is present on Lys-216. At Lys-241 the chain carries N6-succinyllysine. An N6-acetyllysine mark is found at Lys-255, Lys-267, and Lys-272. The residue at position 349 (Lys-349) is an N6-succinyllysine. Glu-421 (proton acceptor) is an active-site residue. 2 positions are modified to N6-acetyllysine; alternate: Lys-437 and Lys-446. An N6-succinyllysine; alternate mark is found at Lys-437 and Lys-446. At Lys-500 the chain carries N6-acetyllysine. Lys-512 bears the N6-acetyllysine; alternate mark. Lys-512 carries the N6-succinyllysine; alternate modification. An N6-succinyllysine modification is found at Lys-542. Residue Lys-637 is modified to N6-acetyllysine; alternate. N6-succinyllysine; alternate is present on Lys-637. Lys-643 carries the N6-succinyllysine modification. Ser-649 bears the Phosphoserine mark. Lys-652 is modified (N6-acetyllysine). Lys-655 carries the N6-succinyllysine modification. The Microbody targeting signal signature appears at 659–661 (SKL).

Belongs to the acyl-CoA oxidase family. As to quaternary structure, homodimer. The enzyme contains three components A, B and C, the latter two being produced from the first by a proteolytic cleavage. Interacts with LONP2. It depends on FAD as a cofactor. In terms of tissue distribution, expressed in Schwann cells. Expressed (at protein level) in liver.

It is found in the peroxisome. It carries out the reaction a 2,3-saturated acyl-CoA + O2 = a (2E)-enoyl-CoA + H2O2. It catalyses the reaction hexadecanoyl-CoA + O2 = (2E)-hexadecenoyl-CoA + H2O2. The enzyme catalyses dodecanoyl-CoA + O2 = (2E)-dodecenoyl-CoA + H2O2. The catalysed reaction is octanoyl-CoA + O2 = (2E)-octenoyl-CoA + H2O2. It carries out the reaction decanoyl-CoA + O2 = (2E)-decenoyl-CoA + H2O2. It catalyses the reaction tetradecanoyl-CoA + O2 = (2E)-tetradecenoyl-CoA + H2O2. The enzyme catalyses hexadecanedioyl-CoA + O2 = (2E)-hexadecenedioyl-CoA + H2O2. The catalysed reaction is tetracosanoyl-CoA + O2 = (2E)-tetracosenoyl-CoA + H2O2. It carries out the reaction glutaryl-CoA + O2 = (2E)-glutaconyl-CoA + H2O2. It catalyses the reaction hexanoyl-CoA + O2 = (2E)-hexenoyl-CoA + H2O2. The enzyme catalyses octadecanoyl-CoA + O2 = (2E)-octadecenoyl-CoA + H2O2. The catalysed reaction is (5Z,8Z,11Z,14Z,17Z)-eicosapentaenoyl-CoA + O2 = (2E,5Z,8Z,11Z,14Z,17Z)-icosahexaenoyl-CoA + H2O2. It carries out the reaction (6Z,9Z,12Z,15Z,18Z,21Z)-tetracosahexaenoyl-CoA + O2 = (2E,6Z,9Z,12Z,15Z,18Z,21Z)-tetracosaheptaenoyl-CoA + H2O2. Its pathway is lipid metabolism; peroxisomal fatty acid beta-oxidation. In terms of biological role, involved in the initial and rate-limiting step of peroxisomal beta-oxidation of straight-chain saturated and unsaturated very-long-chain fatty acids. Catalyzes the desaturation of fatty acyl-CoAs such as palmitoyl-CoA (hexadecanoyl-CoA) to 2-trans-enoyl-CoAs ((2E)-enoyl-CoAs) such as (2E)-hexadecenoyl-CoA, and donates electrons directly to molecular oxygen (O(2)), thereby producing hydrogen peroxide (H(2)O(2)). Shows highest activity against medium-chain fatty acyl-CoAs. Shows optimum activity with a chain length of 10 carbons (decanoyl-CoA) in vitro. Functionally, is active against a much broader range of substrates and shows activity towards long-chain acyl-CoAs. This is Peroxisomal acyl-coenzyme A oxidase 1 from Rattus norvegicus (Rat).